Here is a 500-residue protein sequence, read N- to C-terminus: Glycerol kinase (500 aa).

T13 is an ADP binding site. 3 residues coordinate ATP: T13, T14, and S15. T13 contributes to the sn-glycerol 3-phosphate binding site. Residue R17 coordinates ADP. Positions 83, 84, 135, and 244 each coordinate sn-glycerol 3-phosphate. 5 residues coordinate glycerol: R83, E84, Y135, D244, and Q245. T266 and G309 together coordinate ADP. Residues T266, G309, Q313, and G410 each coordinate ATP. Residues G410 and N414 each contribute to the ADP site.

The protein belongs to the FGGY kinase family.

The catalysed reaction is glycerol + ATP = sn-glycerol 3-phosphate + ADP + H(+). Its pathway is polyol metabolism; glycerol degradation via glycerol kinase pathway; sn-glycerol 3-phosphate from glycerol: step 1/1. With respect to regulation, inhibited by fructose 1,6-bisphosphate (FBP). Functionally, key enzyme in the regulation of glycerol uptake and metabolism. Catalyzes the phosphorylation of glycerol to yield sn-glycerol 3-phosphate. The polypeptide is Glycerol kinase (Burkholderia pseudomallei (strain K96243)).